Reading from the N-terminus, the 339-residue chain is DNA-directed RNA polymerase subunit alpha (339 aa).

The segment at 1–233 (MVREEVAGST…DLFLPFLHAE (233 aa)) is alpha N-terminal domain (alpha-NTD). Residues 264–339 (KKGIPLNCIF…IDLLKNKLSF (76 aa)) form an alpha C-terminal domain (alpha-CTD) region.

Belongs to the RNA polymerase alpha chain family. In terms of assembly, in plastids the minimal PEP RNA polymerase catalytic core is composed of four subunits: alpha, beta, beta', and beta''. When a (nuclear-encoded) sigma factor is associated with the core the holoenzyme is formed, which can initiate transcription.

The protein resides in the plastid. It is found in the chloroplast. It catalyses the reaction RNA(n) + a ribonucleoside 5'-triphosphate = RNA(n+1) + diphosphate. Functionally, DNA-dependent RNA polymerase catalyzes the transcription of DNA into RNA using the four ribonucleoside triphosphates as substrates. This is DNA-directed RNA polymerase subunit alpha from Secale strictum (Mountain rye).